A 645-amino-acid polypeptide reads, in one-letter code: Sodium/potassium/calcium exchanger 3 (645 aa).

An N-terminal signal peptide occupies residues 1–43; that stretch reads MPPPGDQDCARRRSRRRRRDLLLSQLCFLASVALLLWSLSSLR. Residues 44-106 are Extracellular-facing; sequence EQKELDLMDL…DIFSNEDRRQ (63 aa). 2 N-linked (GlcNAc...) asparagine glycosylation sites follow: Asn-70 and Asn-85. A helical membrane pass occupies residues 107 to 127; that stretch reads GAVVLHVLCAMYMFYALAIVC. The Cytoplasmic segment spans residues 128 to 151; that stretch reads DDFFVPSLEKICERLHLSEDVAGA. One copy of the Alpha-1 repeat lies at 148-188; sequence VAGATFMAAGSSAPELFTSVIGVFITKGDVGVGTIVGSAVF. The helical transmembrane segment at 152–172 threads the bilayer; it reads TFMAAGSSAPELFTSVIGVFI. The Extracellular segment spans residues 173–181; the sequence is TKGDVGVGT. Residues 182–202 form a helical membrane-spanning segment; the sequence is IVGSAVFNILCIIGVCGLFAG. At 203-209 the chain is on the cytoplasmic side; the sequence is QVVALSS. Residues 210 to 230 traverse the membrane as a helical segment; it reads WCLLRDSIYYTLSVVALIVFI. Over 231–234 the chain is Extracellular; sequence YDEK. Residues 235–255 form a helical membrane-spanning segment; sequence VSWWESLVLVLMYLIYIVIMK. Residues 256 to 486 lie on the Cytoplasmic side of the membrane; it reads YNACIHQCFE…WFMVTFASST (231 aa). Ser-307 carries the post-translational modification Phosphoserine. Disordered stretches follow at residues 379–398 and 404–442; these read TVEN…NGTR and AETD…PFDP. Acidic residues predominate over residues 404–435; sequence AETDNETENENEDNENNENDEEEEEDEDDDEG. The chain crosses the membrane as a helical span at residues 487 to 507; sequence LWIAAFSYMMVWMVTIIGYTL. The Extracellular segment spans residues 508–512; sequence GIPDV. Residues 513–533 traverse the membrane as a helical segment; that stretch reads IMGITFLAAGTSVPDCMASLI. An Alpha-2 repeat occupies 520 to 551; the sequence is AAGTSVPDCMASLIVARQGMGDMAVSNSIGSN. Topologically, residues 534–551 are cytoplasmic; that stretch reads VARQGMGDMAVSNSIGSN. Residues 552-572 traverse the membrane as a helical segment; sequence VFDILIGLGLPWALQTLAVDY. Residues 573 to 582 lie on the Extracellular side of the membrane; it reads GSYIRLNSRG. A helical membrane pass occupies residues 583–603; sequence LIYSVGLLLASVFVTVFGVHL. The Cytoplasmic segment spans residues 604–617; sequence NKWQLDKKLGCGCL. Residues 618–638 traverse the membrane as a helical segment; that stretch reads FLYGVFLCFSIMTEFNVFTFV. Residues 639–645 are Extracellular-facing; that stretch reads NLPMCGD.

This sequence belongs to the Ca(2+):cation antiporter (CaCA) (TC 2.A.19) family. SLC24A subfamily. As to expression, abundant in the brain. Highest levels found in selected thalamic nuclei, hippocampal CA1 neurons and in layer IV of the cerebral cortex. Expressed in dental tissues.

It is found in the cell membrane. The enzyme catalyses Ca(2+)(out) + K(+)(out) + 4 Na(+)(in) = Ca(2+)(in) + K(+)(in) + 4 Na(+)(out). Its function is as follows. Calcium, potassium:sodium antiporter that transports 1 Ca(2+) and 1 K(+) in exchange for 4 Na(+). The sequence is that of Sodium/potassium/calcium exchanger 3 (Slc24a3) from Mus musculus (Mouse).